A 216-amino-acid polypeptide reads, in one-letter code: Large ribosomal subunit protein uL1 (216 aa).

It belongs to the universal ribosomal protein uL1 family. In terms of assembly, component of the large ribosomal subunit.

Its subcellular location is the cytoplasm. Its function is as follows. Component of the large ribosomal subunit. The ribosome is a large ribonucleoprotein complex responsible for the synthesis of proteins in the cell. This Ictalurus punctatus (Channel catfish) protein is Large ribosomal subunit protein uL1 (rpl10a).